A 156-amino-acid chain; its full sequence is 6,7-dimethyl-8-ribityllumazine synthase (156 aa).

Residues phenylalanine 22, 57 to 59 (AYE), and 81 to 83 (SVI) contribute to the 5-amino-6-(D-ribitylamino)uracil site. A (2S)-2-hydroxy-3-oxobutyl phosphate-binding site is contributed by 86–87 (GT). Histidine 89 (proton donor) is an active-site residue. Phenylalanine 114 contacts 5-amino-6-(D-ribitylamino)uracil. Arginine 128 provides a ligand contact to (2S)-2-hydroxy-3-oxobutyl phosphate.

Belongs to the DMRL synthase family. In terms of assembly, forms an icosahedral capsid composed of 60 subunits, arranged as a dodecamer of pentamers.

The catalysed reaction is (2S)-2-hydroxy-3-oxobutyl phosphate + 5-amino-6-(D-ribitylamino)uracil = 6,7-dimethyl-8-(1-D-ribityl)lumazine + phosphate + 2 H2O + H(+). It participates in cofactor biosynthesis; riboflavin biosynthesis; riboflavin from 2-hydroxy-3-oxobutyl phosphate and 5-amino-6-(D-ribitylamino)uracil: step 1/2. Catalyzes the formation of 6,7-dimethyl-8-ribityllumazine by condensation of 5-amino-6-(D-ribitylamino)uracil with 3,4-dihydroxy-2-butanone 4-phosphate. This is the penultimate step in the biosynthesis of riboflavin. This is 6,7-dimethyl-8-ribityllumazine synthase from Photobacterium profundum (strain SS9).